The chain runs to 232 residues: Large ribosomal subunit protein uL1 (232 aa).

The protein belongs to the universal ribosomal protein uL1 family. As to quaternary structure, part of the 50S ribosomal subunit.

Its function is as follows. Binds directly to 23S rRNA. The L1 stalk is quite mobile in the ribosome, and is involved in E site tRNA release. Protein L1 is also a translational repressor protein, it controls the translation of the L11 operon by binding to its mRNA. The sequence is that of Large ribosomal subunit protein uL1 from Chlamydia caviae (strain ATCC VR-813 / DSM 19441 / 03DC25 / GPIC) (Chlamydophila caviae).